Consider the following 262-residue polypeptide: Diaminopimelate epimerase (262 aa).

Residues asparagine 17, glutamine 45, and asparagine 63 each contribute to the substrate site. Residue cysteine 72 is the Proton donor of the active site. Substrate-binding positions include 73–74, asparagine 154, asparagine 187, and 205–206; these read GN and ER. Cysteine 214 serves as the catalytic Proton acceptor. 215–216 is a binding site for substrate; it reads GS.

This sequence belongs to the diaminopimelate epimerase family. As to quaternary structure, homodimer.

It localises to the cytoplasm. It carries out the reaction (2S,6S)-2,6-diaminopimelate = meso-2,6-diaminopimelate. It participates in amino-acid biosynthesis; L-lysine biosynthesis via DAP pathway; DL-2,6-diaminopimelate from LL-2,6-diaminopimelate: step 1/1. Functionally, catalyzes the stereoinversion of LL-2,6-diaminopimelate (L,L-DAP) to meso-diaminopimelate (meso-DAP), a precursor of L-lysine and an essential component of the bacterial peptidoglycan. This chain is Diaminopimelate epimerase, found in Wolbachia sp. subsp. Drosophila simulans (strain wRi).